The following is a 73-amino-acid chain: Putative defensin-like protein 277 (73 aa).

Residues 1 to 24 (MSAQKIYLASLLLFICLVFPQSTA) form the signal peptide. 4 disulfides stabilise this stretch: Cys-27–Cys-64, Cys-33–Cys-52, Cys-39–Cys-62, and Cys-43–Cys-63.

The protein belongs to the DEFL family.

It is found in the secreted. This is Putative defensin-like protein 277 from Arabidopsis thaliana (Mouse-ear cress).